The primary structure comprises 324 residues: Beta-ketoacyl-[acyl-carrier-protein] synthase III (324 aa).

Active-site residues include Cys112 and His249. The interval 250–254 (QANRR) is ACP-binding. Asn279 is a catalytic residue.

Belongs to the thiolase-like superfamily. FabH family. As to quaternary structure, homodimer.

Its subcellular location is the cytoplasm. It catalyses the reaction malonyl-[ACP] + acetyl-CoA + H(+) = 3-oxobutanoyl-[ACP] + CO2 + CoA. It functions in the pathway lipid metabolism; fatty acid biosynthesis. In terms of biological role, catalyzes the condensation reaction of fatty acid synthesis by the addition to an acyl acceptor of two carbons from malonyl-ACP. Catalyzes the first condensation reaction which initiates fatty acid synthesis and may therefore play a role in governing the total rate of fatty acid production. Possesses both acetoacetyl-ACP synthase and acetyl transacylase activities. Its substrate specificity determines the biosynthesis of branched-chain and/or straight-chain of fatty acids. The polypeptide is Beta-ketoacyl-[acyl-carrier-protein] synthase III (Streptococcus equi subsp. zooepidemicus (strain H70)).